We begin with the raw amino-acid sequence, 368 residues long: Interferon-stimulated 20 kDa exonuclease-like 2 (368 aa).

Disordered regions lie at residues 33-107 (FLEQ…APSK) and 127-187 (PKTK…PTVP). Residues 42-54 (KKNQPPNKVSKLN) show a composition bias toward polar residues. Basic and acidic residues predominate over residues 77–96 (KKKEAAASKRDSERSKDKKA). The span at 131-145 (STQKKGSKKKSLKKK) shows a compositional bias: basic residues. The region spanning 194 to 368 (MVAIDCEMVG…QHLAQNPPEN (175 aa)) is the Exonuclease domain.

It is found in the nucleus. It localises to the nucleolus. Functionally, 3'-&gt; 5'-exoribonuclease involved in ribosome biogenesis in the processing of the 12S pre-rRNA. Displays a strong specificity for a 3'-end containing a free hydroxyl group. This chain is Interferon-stimulated 20 kDa exonuclease-like 2 (Isg20l2), found in Mus musculus (Mouse).